The primary structure comprises 383 residues: NIPA-like protein 2 (383 aa).

N-linked (GlcNAc...) asparagine glycans are attached at residues N23 and N33. 9 helical membrane passes run I46–N66, V88–Y108, L115–L135, L144–I164, F177–L197, I208–A228, L243–V263, V278–Y298, and F306–V326. Residues D352–S383 form a disordered region.

Belongs to the NIPA family.

It localises to the membrane. The sequence is that of NIPA-like protein 2 (Nipal2) from Mus musculus (Mouse).